Consider the following 131-residue polypeptide: SPbeta prophage-derived UPF0715 membrane protein YopD (131 aa).

A run of 4 helical transmembrane segments spans residues 12–32 (VYTL…YLFV), 38–58 (AIAL…YLVF), 75–95 (LINF…FWFV), and 108–128 (FEYY…DSIF).

This sequence belongs to the UPF0715 family.

The protein resides in the cell membrane. This Bacillus subtilis (strain 168) protein is SPbeta prophage-derived UPF0715 membrane protein YopD (yopD).